Reading from the N-terminus, the 314-residue chain is tRNA-cytidine(32) 2-sulfurtransferase (314 aa).

A PP-loop motif motif is present at residues 39 to 44 (SGGKDS). The [4Fe-4S] cluster site is built by Cys-114, Cys-117, and Cys-205.

It belongs to the TtcA family. As to quaternary structure, homodimer. The cofactor is Mg(2+). It depends on [4Fe-4S] cluster as a cofactor.

The protein localises to the cytoplasm. It catalyses the reaction cytidine(32) in tRNA + S-sulfanyl-L-cysteinyl-[cysteine desulfurase] + AH2 + ATP = 2-thiocytidine(32) in tRNA + L-cysteinyl-[cysteine desulfurase] + A + AMP + diphosphate + H(+). It participates in tRNA modification. Functionally, catalyzes the ATP-dependent 2-thiolation of cytidine in position 32 of tRNA, to form 2-thiocytidine (s(2)C32). The sulfur atoms are provided by the cysteine/cysteine desulfurase (IscS) system. This chain is tRNA-cytidine(32) 2-sulfurtransferase, found in Cupriavidus necator (strain ATCC 17699 / DSM 428 / KCTC 22496 / NCIMB 10442 / H16 / Stanier 337) (Ralstonia eutropha).